We begin with the raw amino-acid sequence, 20 residues long: Fibrinogen (20 aa).

Positions 1-20 constitute a Vitellogenin domain; sequence LHSNLEYQYRYSGRVASGIP.

In terms of tissue distribution, secreted into the hemolymph.

The protein resides in the secreted. It is found in the extracellular space. Functionally, involved in lipid transport. Plays a role in hemolymph clotting. May be involved in wound healing in the cuticle. This Pacifastacus leniusculus (Signal crayfish) protein is Fibrinogen.